Here is a 165-residue protein sequence, read N- to C-terminus: Growth arrest and DNA damage-inducible protein GADD45 alpha (165 aa).

Threonine 2 carries the post-translational modification Phosphothreonine.

This sequence belongs to the GADD45 family. In terms of assembly, interacts with MAPK14. Predominantly monomeric but also forms dimers and other oligomers as concentration increases. Interacts with GADD45GIP1. Interacts weakly with PCNA. Interacts with AURKA, likely to compete with dimerization.

It is found in the nucleus. In T-cells, functions as a regulator of p38 MAPKs by inhibiting p88 phosphorylation and activity. Might affect PCNA interaction with some CDK (cell division protein kinase) complexes; stimulates DNA excision repair in vitro and inhibits entry of cells into S phase. This Homo sapiens (Human) protein is Growth arrest and DNA damage-inducible protein GADD45 alpha (GADD45A).